Here is a 393-residue protein sequence, read N- to C-terminus: Protein TsgA (393 aa).

12 helical membrane passes run 11–31 (WISFLSYALTGALVIVTGMVM), 51–71 (FLNAGILISIFLNAWLMEIIP), 78–98 (FGFILMVLAVAGLMFSHSLAL), 101–121 (AAMFVLGLVSGITMSIGTFLI), 134–154 (LLFTDSFFSMAGMIFPMVAAF), 162–182 (WYWVYACIGLVYLAIFILTFG), 206–226 (IGVLFLAVAALCYILGQLGFI), 245–265 (ALVSDFWMSYMFGMWAFSFIL), 273–293 (ILTVLAGMAAVLMYLFITGTQ), 298–318 (WFILTLGFFSSAIYTSIITLG), 332–352 (FILTCGTIGTMLTFVVTGPIV), and 361–381 (LLTANGLYAVVFVMCFALGFV).

Belongs to the major facilitator superfamily. TsgA family.

Its subcellular location is the cell inner membrane. The chain is Protein TsgA from Salmonella agona (strain SL483).